Consider the following 354-residue polypeptide: UDP-N-acetylglucosamine--N-acetylmuramyl-(pentapeptide) pyrophosphoryl-undecaprenol N-acetylglucosamine transferase (354 aa).

UDP-N-acetyl-alpha-D-glucosamine is bound by residues 11–13, Arg-164, Ser-194, and Gln-289; that span reads TAG.

This sequence belongs to the glycosyltransferase 28 family. MurG subfamily.

It localises to the cell membrane. The catalysed reaction is di-trans,octa-cis-undecaprenyl diphospho-N-acetyl-alpha-D-muramoyl-L-alanyl-D-glutamyl-meso-2,6-diaminopimeloyl-D-alanyl-D-alanine + UDP-N-acetyl-alpha-D-glucosamine = di-trans,octa-cis-undecaprenyl diphospho-[N-acetyl-alpha-D-glucosaminyl-(1-&gt;4)]-N-acetyl-alpha-D-muramoyl-L-alanyl-D-glutamyl-meso-2,6-diaminopimeloyl-D-alanyl-D-alanine + UDP + H(+). It participates in cell wall biogenesis; peptidoglycan biosynthesis. Cell wall formation. Catalyzes the transfer of a GlcNAc subunit on undecaprenyl-pyrophosphoryl-MurNAc-pentapeptide (lipid intermediate I) to form undecaprenyl-pyrophosphoryl-MurNAc-(pentapeptide)GlcNAc (lipid intermediate II). This Clostridium botulinum (strain Langeland / NCTC 10281 / Type F) protein is UDP-N-acetylglucosamine--N-acetylmuramyl-(pentapeptide) pyrophosphoryl-undecaprenol N-acetylglucosamine transferase.